We begin with the raw amino-acid sequence, 304 residues long: Acetylxylan esterase A (304 aa).

An N-terminal signal peptide occupies residues 1 to 19 (MVKLQYLLSILLYAYSCTA). Ser147 acts as the Charge relay system in catalysis. N-linked (GlcNAc...) asparagine glycosylation is present at Asn189.

Belongs to the carbohydrate esterase 1 (CE1) family. AxeA subfamily. In terms of assembly, monomer.

Its subcellular location is the secreted. The enzyme catalyses Deacetylation of xylans and xylo-oligosaccharides.. The protein operates within glycan degradation; xylan degradation. Its function is as follows. Acetylxylan esterase involved in the hydrolysis of xylan, a major structural heterogeneous polysaccharide found in plant biomass representing the second most abundant polysaccharide in the biosphere, after cellulose. Degrades acetylated xylans by cleaving acetyl side groups from the hetero-xylan backbone. The polypeptide is Acetylxylan esterase A (axeA) (Emericella nidulans (strain FGSC A4 / ATCC 38163 / CBS 112.46 / NRRL 194 / M139) (Aspergillus nidulans)).